The primary structure comprises 510 residues: ATP synthase subunit alpha (510 aa).

Residue 171 to 178 (GDRQTGKT) participates in ATP binding.

This sequence belongs to the ATPase alpha/beta chains family. In terms of assembly, F-type ATPases have 2 components, CF(1) - the catalytic core - and CF(0) - the membrane proton channel. CF(1) has five subunits: alpha(3), beta(3), gamma(1), delta(1), epsilon(1). CF(0) has three main subunits: a(1), b(2) and c(9-12). The alpha and beta chains form an alternating ring which encloses part of the gamma chain. CF(1) is attached to CF(0) by a central stalk formed by the gamma and epsilon chains, while a peripheral stalk is formed by the delta and b chains.

Its subcellular location is the cell inner membrane. The catalysed reaction is ATP + H2O + 4 H(+)(in) = ADP + phosphate + 5 H(+)(out). Its function is as follows. Produces ATP from ADP in the presence of a proton gradient across the membrane. The alpha chain is a regulatory subunit. The protein is ATP synthase subunit alpha of Phenylobacterium zucineum (strain HLK1).